Here is a 249-residue protein sequence, read N- to C-terminus: MIT domain-containing protein 1 (249 aa).

An MIT domain is found at Gln-8–Gly-86. Residues Ser-168–Arg-231 are important for association with membranes.

In terms of assembly, homodimer. Interacts (via MIT domain) with CHMP1A, CHMP1B, CHMP2A and IST1.

It localises to the late endosome membrane. It is found in the midbody. The protein localises to the membrane. In terms of biological role, required for efficient abscission at the end of cytokinesis, together with components of the ESCRT-III complex. This Mus musculus (Mouse) protein is MIT domain-containing protein 1 (Mitd1).